Consider the following 311-residue polypeptide: Coproporphyrin III ferrochelatase 1 (311 aa).

Residues tyrosine 12, arginine 29, 45–46 (RY), serine 53, and tyrosine 124 contribute to the Fe-coproporphyrin III site. 2 residues coordinate Fe(2+): histidine 182 and glutamate 263.

This sequence belongs to the ferrochelatase family.

Its subcellular location is the cytoplasm. The enzyme catalyses Fe-coproporphyrin III + 2 H(+) = coproporphyrin III + Fe(2+). It participates in porphyrin-containing compound metabolism; protoheme biosynthesis. Involved in coproporphyrin-dependent heme b biosynthesis. Catalyzes the insertion of ferrous iron into coproporphyrin III to form Fe-coproporphyrin III. The polypeptide is Coproporphyrin III ferrochelatase 1 (Bacillus anthracis).